Here is a 210-residue protein sequence, read N- to C-terminus: Prolactin-2 (210 aa).

Positions 1-23 (MARRSQGTKLHLAVLCLVVSCHA) are cleaved as a signal peptide. 2 disulfide bridges follow: cysteine 69/cysteine 183 and cysteine 200/cysteine 210.

It belongs to the somatotropin/prolactin family.

The protein localises to the secreted. This Oncorhynchus tshawytscha (Chinook salmon) protein is Prolactin-2 (prl2).